The chain runs to 331 residues: 6-phosphogluconolactonase (331 aa).

K287 bears the N6-acetyllysine mark.

This sequence belongs to the cycloisomerase 2 family.

It catalyses the reaction 6-phospho-D-glucono-1,5-lactone + H2O = 6-phospho-D-gluconate + H(+). Its pathway is carbohydrate degradation; pentose phosphate pathway; D-ribulose 5-phosphate from D-glucose 6-phosphate (oxidative stage): step 2/3. Catalyzes the hydrolysis of 6-phosphogluconolactone to 6-phosphogluconate. The polypeptide is 6-phosphogluconolactonase (Escherichia coli O7:K1 (strain IAI39 / ExPEC)).